The primary structure comprises 214 residues: Homologous-pairing protein 2 homolog (214 aa).

Residues 79–147 (SDSELKDLDA…EHKLTNIKSA (69 aa)) adopt a coiled-coil conformation. Positions 115–179 (TSSLTTEEML…WKKRKRMATD (65 aa)) are DNA-binding.

This sequence belongs to the HOP2 family.

The protein localises to the nucleus. Plays an important role in meiotic recombination. Stimulates DMC1-mediated strand exchange required for pairing of homologous chromosomes during meiosis. The sequence is that of Homologous-pairing protein 2 homolog (psmc3ip) from Xenopus laevis (African clawed frog).